A 339-amino-acid polypeptide reads, in one-letter code: Polyhydroxybutyrate depolymerase (339 aa).

Positions 1 to 20 (MFDSVKIAWLVALGAAQVAA) are cleaved as a signal peptide. Ser39 is a catalytic residue. A disulfide bridge connects residues Cys70 and Cys79. Asp121 is an active-site residue. Asn144 carries N-linked (GlcNAc...) asparagine glycosylation. His155 is an active-site residue. 3 disulfides stabilise this stretch: Cys169/Cys180, Cys234/Cys241, and Cys250/Cys304. Trp307 lines the (3R)-hydroxybutanoate trimer pocket.

Belongs to the carbohydrate esterase 1 (CE1) family.

It localises to the secreted. It catalyses the reaction [(3R)-hydroxybutanoate](n) + H2O = [(3R)-hydroxybutanoate](n-1) + (R)-3-hydroxybutanoate + H(+). The enzyme is completely inhibited by dithiothreitol (DTT) and diisopropylfluorophosphate (DFP), and partially inhibited by HgCl(2) and by enzyme3-(p-nitrophenoxy)propane (EPNP). Activity is not affected by N-ethylmaleimide (NEM) or phenylmethylsulfonyl fluoride (PMSF). Esterase involved in the hydrolysis of polyhydroxybutyrate, a microbial polyester that can be produced from renewable resources. The protein is Polyhydroxybutyrate depolymerase of Talaromyces funiculosus (Fruitlet core rot fungus).